A 306-amino-acid polypeptide reads, in one-letter code: NAD kinase 1 (306 aa).

Catalysis depends on aspartate 67, which acts as the Proton acceptor. Residues 67 to 68, 149 to 150, and aspartate 181 each bind NAD(+); these read DG and NE.

The protein belongs to the NAD kinase family. It depends on a divalent metal cation as a cofactor.

The protein resides in the cytoplasm. It catalyses the reaction NAD(+) + ATP = ADP + NADP(+) + H(+). In terms of biological role, involved in the regulation of the intracellular balance of NAD and NADP, and is a key enzyme in the biosynthesis of NADP. Catalyzes specifically the phosphorylation on 2'-hydroxyl of the adenosine moiety of NAD to yield NADP. The polypeptide is NAD kinase 1 (Thermosynechococcus vestitus (strain NIES-2133 / IAM M-273 / BP-1)).